The sequence spans 206 residues: Large ribosomal subunit protein eL13 (206 aa).

A compositionally biased stretch (basic and acidic residues) spans 184 to 193 (EKTNQKWDGK). The interval 184–206 (EKTNQKWDGKRKAKAQAAAEPKA) is disordered.

Belongs to the eukaryotic ribosomal protein eL13 family.

This chain is Large ribosomal subunit protein eL13 (RPL13), found in Tetrahymena thermophila (strain SB210).